The primary structure comprises 423 residues: Lysosomal acid phosphatase (423 aa).

Residues 1-30 (MAGKRSGWSRAALLQLLLGVNLVVMPPTRA) form the signal peptide. Residues 31 to 380 (RSLRFVTLLY…QLASGPADTE (350 aa)) are Lumenal-facing. His42 functions as the Nucleophile in the catalytic mechanism. N-linked (GlcNAc...) asparagine glycosylation is found at Asn92, Asn133, Asn167, Asn177, Asn191, and Asn267. 3 disulfide bridges follow: Cys159–Cys370, Cys212–Cys310, and Cys345–Cys349. Asp287 functions as the Proton donor in the catalytic mechanism. 2 N-linked (GlcNAc...) asparagine glycosylation sites follow: Asn322 and Asn331. Residues 381-401 (VIVALAVCGSILFLLIVLLLT) form a helical membrane-spanning segment. Residues 402–423 (VLFRMQAQPPGYRHVADGEDHA) lie on the Cytoplasmic side of the membrane.

It belongs to the histidine acid phosphatase family. The membrane-bound form is converted to the soluble form by sequential proteolytic processing. First, the C-terminal cytoplasmic tail is removed. Cleavage by a lysosomal protease releases the soluble form in the lysosome lumen. In terms of processing, N-glycosylated. The intermediates formed during enzymatic deglycosylation suggest that all eight predicted N-glycosylation sites are used.

It is found in the lysosome membrane. Its subcellular location is the lysosome lumen. It carries out the reaction a phosphate monoester + H2O = an alcohol + phosphate. The protein is Lysosomal acid phosphatase (ACP2) of Homo sapiens (Human).